The primary structure comprises 401 residues: Glutamyl-tRNA reductase (401 aa).

Residues 45-48 (TCNR), Ser101, 106-108 (EDQ), and Gln112 contribute to the substrate site. Residue Cys46 is the Nucleophile of the active site. 177–182 (GYGDVG) lines the NADP(+) pocket.

It belongs to the glutamyl-tRNA reductase family. Homodimer.

It carries out the reaction (S)-4-amino-5-oxopentanoate + tRNA(Glu) + NADP(+) = L-glutamyl-tRNA(Glu) + NADPH + H(+). The protein operates within porphyrin-containing compound metabolism; protoporphyrin-IX biosynthesis; 5-aminolevulinate from L-glutamyl-tRNA(Glu): step 1/2. In terms of biological role, catalyzes the NADPH-dependent reduction of glutamyl-tRNA(Glu) to glutamate 1-semialdehyde (GSA). The chain is Glutamyl-tRNA reductase from Clostridium botulinum (strain Eklund 17B / Type B).